A 250-amino-acid chain; its full sequence is 1-(5-phosphoribosyl)-5-[(5-phosphoribosylamino)methylideneamino] imidazole-4-carboxamide isomerase (250 aa).

Aspartate 7 acts as the Proton acceptor in catalysis. Residue aspartate 129 is the Proton donor of the active site.

This sequence belongs to the HisA/HisF family.

Its subcellular location is the cytoplasm. The catalysed reaction is 1-(5-phospho-beta-D-ribosyl)-5-[(5-phospho-beta-D-ribosylamino)methylideneamino]imidazole-4-carboxamide = 5-[(5-phospho-1-deoxy-D-ribulos-1-ylimino)methylamino]-1-(5-phospho-beta-D-ribosyl)imidazole-4-carboxamide. It participates in amino-acid biosynthesis; L-histidine biosynthesis; L-histidine from 5-phospho-alpha-D-ribose 1-diphosphate: step 4/9. The sequence is that of 1-(5-phosphoribosyl)-5-[(5-phosphoribosylamino)methylideneamino] imidazole-4-carboxamide isomerase from Shewanella denitrificans (strain OS217 / ATCC BAA-1090 / DSM 15013).